The chain runs to 464 residues: E3 ubiquitin-protein ligase ITT1 (464 aa).

Residues 176–455 (SNYHCCICME…EAYSGCYGRL (280 aa)) are TRIAD supradomain. Zn(2+) is bound by residues Cys180, Cys183, Cys207, Cys210, Cys290, Cys300, Cys316, Cys319, Cys402, and Cys405. The RING-type 1 zinc-finger motif lies at 180–236 (CCICMEMEKGVRMIKLPCENANVEHYLCRGCAKSYFTAMIQENRISSVRCPQCEYKE). An IBR-type zinc finger spans residues 267–338 (DTELCERYEK…HAWHGYNNKC (72 aa)). Residues 402-431 (CPKCKVVVERSEGCNKMKCEVCGTLFCFIC) form an RING-type 2; atypical zinc finger. The active site involves Cys415. Zn(2+) is bound by residues Cys420, Cys423, Cys428, Cys431, His443, and Cys451.

Belongs to the RBR family. RNF14 subfamily. Interacts with translation release factors eRF1 (SUP45) and eRF3 (SUP35) in vitro.

The catalysed reaction is [E2 ubiquitin-conjugating enzyme]-S-ubiquitinyl-L-cysteine + [acceptor protein]-L-lysine = [E2 ubiquitin-conjugating enzyme]-L-cysteine + [acceptor protein]-N(6)-ubiquitinyl-L-lysine.. Its pathway is protein modification; protein ubiquitination. E3 ubiquitin-protein ligase involved in translation quality control. Involved in the rescue of stalled ribosomes by promoting ubiquitination and degradation of proteins on stalled ribosomes. Specifically required to resolve RNA-protein cross-links caused by reactive aldehydes, which trigger translation stress by stalling ribosomes: acts by catalying 'Lys-6'-linked ubiquitination of RNA-protein cross-links, leading to their degradation. Interacts with the translation termination factors eRF1 (SUP45) and eRF3 (SUP35); overexpression decreases the efficiency of translation termination. The sequence is that of E3 ubiquitin-protein ligase ITT1 from Saccharomyces cerevisiae (strain ATCC 204508 / S288c) (Baker's yeast).